The following is a 589-amino-acid chain: Serine/threonine-protein kinase PknJ (589 aa).

At 1–342 the chain is on the cytoplasmic side; sequence MAHELSAGSV…LPRRPRRYRR (342 aa). One can recognise a Protein kinase domain in the interval 14–276; sequence YRIERMLGAG…SAGEFAHAAA (263 aa). Residues 20–28 and Lys-43 contribute to the ATP site; that span reads LGAGGMGTV. Asp-136 serves as the catalytic Proton acceptor. The chain crosses the membrane as a helical span at residues 343–363; it reads GVAAVAAVMVVAAAAVTAVTM. The Extracellular portion of the chain corresponds to 364 to 589; the sequence is TSHQPRTATP…TNYILAKIPG (226 aa). Over residues 365–387 the composition is skewed to low complexity; that stretch reads SHQPRTATPPSAAALSPTSSSTT. The disordered stretch occupies residues 365–400; sequence SHQPRTATPPSAAALSPTSSSTTPPQPPIVTRSRLP.

This sequence belongs to the protein kinase superfamily. Ser/Thr protein kinase family. As to quaternary structure, homodimer.

It is found in the cell membrane. It carries out the reaction L-seryl-[protein] + ATP = O-phospho-L-seryl-[protein] + ADP + H(+). The enzyme catalyses L-threonyl-[protein] + ATP = O-phospho-L-threonyl-[protein] + ADP + H(+). This is Serine/threonine-protein kinase PknJ (pknJ) from Mycobacterium bovis (strain ATCC BAA-935 / AF2122/97).